Reading from the N-terminus, the 274-residue chain is S-adenosylmethionine decarboxylase proenzyme (274 aa).

Ser-119 functions as the Schiff-base intermediate with substrate; via pyruvic acid in the catalytic mechanism. Ser-119 is subject to Pyruvic acid (Ser); by autocatalysis. Residue His-124 is the Proton acceptor; for processing activity of the active site. Residue Cys-147 is the Proton donor; for catalytic activity of the active site.

The protein belongs to the prokaryotic AdoMetDC family. Type 2 subfamily. Heterooctamer of four alpha and four beta chains arranged as a tetramer of alpha/beta heterodimers. The cofactor is pyruvate. Is synthesized initially as an inactive proenzyme. Formation of the active enzyme involves a self-maturation process in which the active site pyruvoyl group is generated from an internal serine residue via an autocatalytic post-translational modification. Two non-identical subunits are generated from the proenzyme in this reaction, and the pyruvate is formed at the N-terminus of the alpha chain, which is derived from the carboxyl end of the proenzyme. The post-translation cleavage follows an unusual pathway, termed non-hydrolytic serinolysis, in which the side chain hydroxyl group of the serine supplies its oxygen atom to form the C-terminus of the beta chain, while the remainder of the serine residue undergoes an oxidative deamination to produce ammonia and the pyruvoyl group blocking the N-terminus of the alpha chain.

It carries out the reaction S-adenosyl-L-methionine + H(+) = S-adenosyl 3-(methylsulfanyl)propylamine + CO2. Its pathway is amine and polyamine biosynthesis; S-adenosylmethioninamine biosynthesis; S-adenosylmethioninamine from S-adenosyl-L-methionine: step 1/1. Functionally, catalyzes the decarboxylation of S-adenosylmethionine to S-adenosylmethioninamine (dcAdoMet), the propylamine donor required for the synthesis of the polyamines spermine and spermidine from the diamine putrescine. This is S-adenosylmethionine decarboxylase proenzyme from Clostridium acetobutylicum (strain ATCC 824 / DSM 792 / JCM 1419 / IAM 19013 / LMG 5710 / NBRC 13948 / NRRL B-527 / VKM B-1787 / 2291 / W).